The following is a 156-amino-acid chain: Small ribosomal subunit protein eS10 (156 aa).

The segment at 91–156 is disordered; the sequence is LKRQTRPEAA…FGRGRQEQEE (66 aa). Positions 95–119 are enriched in basic and acidic residues; sequence TRPEAARPRPKEGAPRAQVGEDRAG.

Belongs to the eukaryotic ribosomal protein eS10 family.

The protein localises to the cytoplasm. The chain is Small ribosomal subunit protein eS10 (RPS10) from Lumbricus rubellus (Humus earthworm).